We begin with the raw amino-acid sequence, 211 residues long: Dephospho-CoA kinase (211 aa).

One can recognise a DPCK domain in the interval 3-206; sequence VLGLTGGIGS…PGMKGPDPHA (204 aa). 11-16 contributes to the ATP binding site; it reads GSGKSI.

The protein belongs to the CoaE family.

Its subcellular location is the cytoplasm. It catalyses the reaction 3'-dephospho-CoA + ATP = ADP + CoA + H(+). It participates in cofactor biosynthesis; coenzyme A biosynthesis; CoA from (R)-pantothenate: step 5/5. In terms of biological role, catalyzes the phosphorylation of the 3'-hydroxyl group of dephosphocoenzyme A to form coenzyme A. This is Dephospho-CoA kinase from Syntrophotalea carbinolica (strain DSM 2380 / NBRC 103641 / GraBd1) (Pelobacter carbinolicus).